A 70-amino-acid polypeptide reads, in one-letter code: Small ribosomal subunit protein bS21B (70 aa).

The tract at residues 37–70 is disordered; the sequence is SYEKPTTERKRKKAAAVARLRKQVRRSMPPKKKY. Basic residues predominate over residues 45 to 70; the sequence is RKRKKAAAVARLRKQVRRSMPPKKKY.

It belongs to the bacterial ribosomal protein bS21 family.

The protein is Small ribosomal subunit protein bS21B of Burkholderia pseudomallei (strain K96243).